Consider the following 214-residue polypeptide: Phosphatidylserine decarboxylase proenzyme (214 aa).

S182 serves as the catalytic Schiff-base intermediate with substrate; via pyruvic acid. S182 is modified (pyruvic acid (Ser); by autocatalysis).

Belongs to the phosphatidylserine decarboxylase family. PSD-A subfamily. Heterodimer of a large membrane-associated beta subunit and a small pyruvoyl-containing alpha subunit. Pyruvate serves as cofactor. Post-translationally, is synthesized initially as an inactive proenzyme. Formation of the active enzyme involves a self-maturation process in which the active site pyruvoyl group is generated from an internal serine residue via an autocatalytic post-translational modification. Two non-identical subunits are generated from the proenzyme in this reaction, and the pyruvate is formed at the N-terminus of the alpha chain, which is derived from the carboxyl end of the proenzyme. The post-translation cleavage follows an unusual pathway, termed non-hydrolytic serinolysis, in which the side chain hydroxyl group of the serine supplies its oxygen atom to form the C-terminus of the beta chain, while the remainder of the serine residue undergoes an oxidative deamination to produce ammonia and the pyruvoyl prosthetic group on the alpha chain.

The protein localises to the cell membrane. The enzyme catalyses a 1,2-diacyl-sn-glycero-3-phospho-L-serine + H(+) = a 1,2-diacyl-sn-glycero-3-phosphoethanolamine + CO2. The protein operates within phospholipid metabolism; phosphatidylethanolamine biosynthesis; phosphatidylethanolamine from CDP-diacylglycerol: step 2/2. Catalyzes the formation of phosphatidylethanolamine (PtdEtn) from phosphatidylserine (PtdSer). This is Phosphatidylserine decarboxylase proenzyme from Burkholderia cenocepacia (strain HI2424).